The sequence spans 427 residues: Pseudouridylate synthase 1 homolog (427 aa).

The disordered stretch occupies residues 20–83 (GPRPSCSPRM…DEERREKPPK (64 aa)). The segment covering 44–79 (QDRRSCSGRAGGDRVWEDGEHPAKKLKSGGDEERRE) has biased composition (basic and acidic residues). The active-site Nucleophile is the Asp146. Residues 407–427 (GGTGAKVPSPLEGSEGDGDTD) form a disordered region. A phosphoserine mark is found at Ser415 and Ser420. Residue Thr426 is modified to Phosphothreonine.

This sequence belongs to the tRNA pseudouridine synthase TruA family. In terms of assembly, monomer. Forms a complex with RARG and the SRA1 RNA in the nucleus. Widely expressed. High levels of expression found in brain and skeletal muscle.

The protein localises to the mitochondrion. It is found in the nucleus. It localises to the cytoplasm. It catalyses the reaction a uridine in tRNA = a pseudouridine in tRNA. The catalysed reaction is uridine(38/39/40) in tRNA = pseudouridine(38/39/40) in tRNA. The enzyme catalyses a uridine in mRNA = a pseudouridine in mRNA. Its function is as follows. Pseudouridylate synthase that catalyzes pseudouridylation of tRNAs and mRNAs. Acts on positions 27/28 in the anticodon stem and also positions 34 and 36 in the anticodon of an intron containing tRNA. Also catalyzes pseudouridylation of mRNAs: mediates pseudouridylation of mRNAs with the consensus sequence 5'-UGUAG-3'. Acts as a regulator of pre-mRNA splicing by mediating pseudouridylation of pre-mRNAs at locations associated with alternatively spliced regions. Pseudouridylation of pre-mRNAs near splice sites directly regulates mRNA splicing and mRNA 3'-end processing. Involved in regulation of nuclear receptor activity through pseudouridylation of SRA1 mRNA. This is Pseudouridylate synthase 1 homolog from Homo sapiens (Human).